A 395-amino-acid polypeptide reads, in one-letter code: Putative pyridoxal phosphate-dependent acyltransferase (395 aa).

A pyridoxal 5'-phosphate-binding site is contributed by 110 to 111; sequence GF. Residue His-135 coordinates substrate. Pyridoxal 5'-phosphate is bound by residues Ser-185, 210-213, and 240-243; these read DDAH and TLSK. The residue at position 243 (Lys-243) is an N6-(pyridoxal phosphate)lysine. Thr-357 lines the substrate pocket.

It belongs to the class-II pyridoxal-phosphate-dependent aminotransferase family. Homodimer. Requires pyridoxal 5'-phosphate as cofactor.

The sequence is that of Putative pyridoxal phosphate-dependent acyltransferase from Staphylococcus aureus (strain Mu50 / ATCC 700699).